The primary structure comprises 245 residues: 14-3-3 protein zeta/delta (245 aa).

N-acetylmethionine is present on methionine 1. Lysine 3 is subject to N6-acetyllysine. Serine 58 carries the post-translational modification Phosphoserine; by PKA. The residue at position 68 (lysine 68) is an N6-acetyllysine. Phosphoserine is present on residues serine 184, serine 207, and serine 210. Phosphothreonine; by CK1 is present on threonine 232.

The protein belongs to the 14-3-3 family. Homodimer. Heterodimerizes with YWHAE. Homo- and heterodimerization is inhibited by phosphorylation on Ser-58. Interacts with FOXO4, NOXA1, SSH1 and ARHGEF2. Interacts with CDK16 and with WEE1 (C-terminal). Interacts with MLF1 (phosphorylated form); the interaction retains it in the cytoplasm. Interacts with BSPRY. Interacts with Thr-phosphorylated ITGB2. Interacts with Pseudomonas aeruginosa exoS (unphosphorylated form). Interacts with BAX; the interaction occurs in the cytoplasm. Under stress conditions, MAPK8-mediated phosphorylation releases BAX to mitochondria. Interacts with phosphorylated RAF1; the interaction is inhibited when YWHAZ is phosphorylated on Thr-232. Interacts with TP53; the interaction enhances p53 transcriptional activity. The Ser-58 phosphorylated form inhibits this interaction and p53 transcriptional activity. Interacts with ABL1 (phosphorylated form); the interaction retains ABL1 in the cytoplasm. Interacts with PKA-phosphorylated AANAT; the interaction modulates AANAT enzymatic activity by increasing affinity for arylalkylamines and acetyl-CoA and protecting the enzyme from dephosphorylation and proteasomal degradation. It may also prevent thiol-dependent inactivation. Interacts with AKT1; the interaction phosphorylates YWHAZ and modulates dimerization. Interacts with GAB2. Interacts with SAMSN1. Interacts with BCL2L11 and TLK2. Interacts with the 'Thr-369' phosphorylated form of DAPK2. Interacts with PI4KB, TBC1D22A and TBC1D22B. Interacts with ZFP36L1 (via phosphorylated form); this interaction occurs in a p38 MAPK- and AKT-signaling pathways. Interacts with SLITRK1. Interacts with AK5, LDB1, MADD, PDE1A and SMARCB1. Interacts with ARHGEF7 and GIT1. Interacts with MEFV. Interacts with ADAM22 (via C-terminus). Post-translationally, the delta, brain-specific form differs from the zeta form in being phosphorylated. Phosphorylation on Ser-184 by MAPK8; promotes dissociation of BAX and translocation of BAX to mitochondria. Phosphorylation on Thr-232; inhibits binding of RAF1. Phosphorylated on Ser-58 by PKA and protein kinase C delta type catalytic subunit in a sphingosine-dependent fashion. Phosphorylation on Ser-58 by PKA; disrupts homodimerization and heterodimerization with YHAE and TP53.

It localises to the cytoplasm. Its subcellular location is the melanosome. Functionally, adapter protein implicated in the regulation of a large spectrum of both general and specialized signaling pathways. Binds to a large number of partners, usually by recognition of a phosphoserine or phosphothreonine motif. Binding generally results in the modulation of the activity of the binding partner. Promotes cytosolic retention and inactivation of TFEB transcription factor by binding to phosphorylated TFEB. Induces ARHGEF7 activity on RAC1 as well as lamellipodia and membrane ruffle formation. In neurons, regulates spine maturation through the modulation of ARHGEF7 activity. This is 14-3-3 protein zeta/delta (Ywhaz) from Mus musculus (Mouse).